Consider the following 74-residue polypeptide: Large ribosomal subunit protein bL31 (74 aa).

Zn(2+)-binding residues include Cys16, Cys18, Cys38, and Cys41.

The protein belongs to the bacterial ribosomal protein bL31 family. Type A subfamily. Part of the 50S ribosomal subunit. The cofactor is Zn(2+).

Binds the 23S rRNA. This chain is Large ribosomal subunit protein bL31, found in Acinetobacter baumannii (strain AB307-0294).